A 403-amino-acid polypeptide reads, in one-letter code: MSNYDRVPCSIAIPNQQVEIQQQPRVFEDQESPVKTKVQQPPPEQVRVPPTVIGATATAKKKSCLSTTSSRKEPPAHPALRRKTVAFGRTVNVSQTVEGTSRHTKKAIASPSQNHRMTEENQEENWRDVMKNEFEVMRKEMQEEATKKQEELNAQNLNKMQEMMSQFFQQITVAKPSAEESQDREKENWYEQSRHARQQKPANKIAKAREIIKREGSIPPEALPILEQRIRTDPMFRQQIDNVLADAECDANRAAYSPLPPLSPPSGRYANGSSGNPALMRETLTVERSIRYDNGLSSIDSRQWTSERNDNRTHDNYRPYEPDPQLQSMYQKGQSVSYYPSEAVGKAHRNNRLEYHVEEVPEYEEEETEVGGRGRGRKYHEPMETESAAERERRIREKYSRRK.

Disordered stretches follow at residues 24-79 (PRVF…AHPA) and 96-127 (TVEG…ENWR). A compositionally biased stretch (basic and acidic residues) spans 116-127 (RMTEENQEENWR). Residues 128-163 (DVMKNEFEVMRKEMQEEATKKQEELNAQNLNKMQEM) adopt a coiled-coil conformation. 4 disordered regions span residues 174-205 (AKPS…ANKI), 255-276 (AYSP…SSGN), 302-325 (RQWT…PDPQ), and 355-403 (YHVE…SRRK). Residues 177–194 (SAEESQDREKENWYEQSR) show a composition bias toward basic and acidic residues. Residues 305–321 (TSERNDNRTHDNYRPYE) are compositionally biased toward basic and acidic residues. Positions 360–369 (VPEYEEEETE) are enriched in acidic residues. Basic and acidic residues predominate over residues 379–403 (YHEPMETESAAERERRIREKYSRRK).

As to quaternary structure, interacts with sas-6 via its coiled coil domain.

Its subcellular location is the cytoplasm. The protein localises to the cytoskeleton. It localises to the microtubule organizing center. The protein resides in the centrosome. It is found in the centriole. Functionally, required for centrosome duplication. Essential for daughter-centriole formation. Requires both maternal and partenal expression, suggesting that it regulates centriole duplication during both spermatogenesis and early embryogenesis. The protein is Spindle assembly abnormal protein 5 (sas-5) of Caenorhabditis briggsae.